We begin with the raw amino-acid sequence, 590 residues long: Aspartate--tRNA(Asp/Asn) ligase (590 aa).

Glu173 contributes to the L-aspartate binding site. Residues 197–200 are aspartate; it reads QIFK. Residue Arg219 participates in L-aspartate binding. ATP is bound by residues 219 to 221 and Gln228; that span reads RDE. Residue His450 coordinates L-aspartate. Residue Glu484 participates in ATP binding. Arg491 provides a ligand contact to L-aspartate. 536–539 lines the ATP pocket; sequence GLDR.

The protein belongs to the class-II aminoacyl-tRNA synthetase family. Type 1 subfamily. As to quaternary structure, homodimer.

It is found in the cytoplasm. The enzyme catalyses tRNA(Asx) + L-aspartate + ATP = L-aspartyl-tRNA(Asx) + AMP + diphosphate. In terms of biological role, aspartyl-tRNA synthetase with relaxed tRNA specificity since it is able to aspartylate not only its cognate tRNA(Asp) but also tRNA(Asn). Reaction proceeds in two steps: L-aspartate is first activated by ATP to form Asp-AMP and then transferred to the acceptor end of tRNA(Asp/Asn). This chain is Aspartate--tRNA(Asp/Asn) ligase, found in Coxiella burnetii (strain RSA 331 / Henzerling II).